The following is a 439-amino-acid chain: Methylenetetrahydrofolate--tRNA-(uracil-5-)-methyltransferase TrmFO (439 aa).

Position 9–14 (9–14 (GAGLAG)) interacts with FAD.

It belongs to the MnmG family. TrmFO subfamily. It depends on FAD as a cofactor.

Its subcellular location is the cytoplasm. It catalyses the reaction uridine(54) in tRNA + (6R)-5,10-methylene-5,6,7,8-tetrahydrofolate + NADH + H(+) = 5-methyluridine(54) in tRNA + (6S)-5,6,7,8-tetrahydrofolate + NAD(+). It carries out the reaction uridine(54) in tRNA + (6R)-5,10-methylene-5,6,7,8-tetrahydrofolate + NADPH + H(+) = 5-methyluridine(54) in tRNA + (6S)-5,6,7,8-tetrahydrofolate + NADP(+). Functionally, catalyzes the folate-dependent formation of 5-methyl-uridine at position 54 (M-5-U54) in all tRNAs. The polypeptide is Methylenetetrahydrofolate--tRNA-(uracil-5-)-methyltransferase TrmFO (Desulforudis audaxviator (strain MP104C)).